The sequence spans 165 residues: MTNLSRGLLLLEDEDFTLVENQAKTFHLSHTVSGKYSIVMFYTDTCPQCSVLKPIVLYFVGDPLLQICLVNVYDSDSQNIIPMSLKSTTPLEYVPFIVFYVNGLPFKIFDGESTLLNFKNFILQTIQEADQIPTDTAAQQSEIPSYTLGKPKSSKVCYLTYEKAY.

Belongs to the IIV-6 196R family.

This is an uncharacterized protein from Invertebrate iridescent virus 3 (IIV-3).